Here is a 687-residue protein sequence, read N- to C-terminus: Ferric transport system permease protein FbpB (687 aa).

Helical transmembrane passes span 10–30 (LFES…ALPS), 50–70 (GWSS…FWLL), 85–105 (LGLI…YKVS), 106–126 (MGYS…FAFA), 141–161 (LLSI…AIFI), 192–212 (LFLS…FALY), 226–246 (IFSI…VTLM), 271–291 (GFNG…FMIL), 318–338 (YNII…IVFI), 347–367 (PLVL…YIAG), 378–398 (LGSM…MWIG), 425–445 (IIVM…SIFY), 450–472 (VNWG…QGLS), 484–504 (IYAG…AYIV), 517–537 (FLTM…YILA), 538–558 (FNDA…SMVM), 594–614 (IWFI…VTSF), 620–640 (TVSA…AYIL), and 649–669 (GVAI…ILFF). The ABC transmembrane type-1 1 domain occupies 188 to 393 (ISNSLFLSGF…IFSLLIFIVQ (206 aa)). The region spanning 479–669 (LINTMIYAGI…VVMMAIILFF (191 aa)) is the ABC transmembrane type-1 2 domain.

It belongs to the binding-protein-dependent transport system permease family. FbpB subfamily. In terms of assembly, the complex is composed of two ATP-binding proteins (FbpC), two transmembrane proteins (FbpB) and a solute-binding protein (FbpA).

Its subcellular location is the cell inner membrane. In terms of biological role, part of the ABC transporter complex FbpABC (TC 3.A.1.10.1) involved in Fe(3+) ions import. Probably responsible for the translocation of the substrate across the membrane. The sequence is that of Ferric transport system permease protein FbpB (fbpB) from Actinobacillus pleuropneumoniae (Haemophilus pleuropneumoniae).